Here is a 109-residue protein sequence, read N- to C-terminus: Parvalbumin-7 (109 aa).

N-acetylalanine is present on Ala2. 2 consecutive EF-hand domains span residues 39–74 and 78–109; these read LSADNVKLVFKALDVDASGFIEEEELKFVLKGFSAD and LTDKETKAFLAAADKDGDGKIGIDEFEALVHE. Ca(2+) is bound by residues Asp52, Asp54, Ser56, Phe58, Glu60, Glu63, Asp91, Asp93, Asp95, Lys97, and Glu102.

Belongs to the parvalbumin family.

In terms of biological role, in muscle, parvalbumin is thought to be involved in relaxation after contraction. It binds two calcium ions. This Danio rerio (Zebrafish) protein is Parvalbumin-7 (pvalb7).